Here is a 334-residue protein sequence, read N- to C-terminus: 6-phosphogluconolactonase (334 aa).

This sequence belongs to the cycloisomerase 2 family.

The catalysed reaction is 6-phospho-D-glucono-1,5-lactone + H2O = 6-phospho-D-gluconate + H(+). Its pathway is carbohydrate degradation; pentose phosphate pathway; D-ribulose 5-phosphate from D-glucose 6-phosphate (oxidative stage): step 2/3. In terms of biological role, catalyzes the hydrolysis of 6-phosphogluconolactone to 6-phosphogluconate. The protein is 6-phosphogluconolactonase of Buchnera aphidicola subsp. Acyrthosiphon pisum (strain Tuc7).